The sequence spans 441 residues: Glutamate--tRNA ligase 2 (441 aa).

Positions 9–19 (PSPTGYIHVGN) match the 'HIGH' region motif. Positions 239–243 (ALSKR) match the 'KMSKS' region motif. Lys242 is an ATP binding site.

It belongs to the class-I aminoacyl-tRNA synthetase family. Glutamate--tRNA ligase type 1 subfamily. Monomer.

It is found in the cytoplasm. It catalyses the reaction tRNA(Glu) + L-glutamate + ATP = L-glutamyl-tRNA(Glu) + AMP + diphosphate. Functionally, catalyzes the attachment of glutamate to tRNA(Glu) in a two-step reaction: glutamate is first activated by ATP to form Glu-AMP and then transferred to the acceptor end of tRNA(Glu). This is Glutamate--tRNA ligase 2 from Cereibacter sphaeroides (strain ATCC 17029 / ATH 2.4.9) (Rhodobacter sphaeroides).